A 404-amino-acid polypeptide reads, in one-letter code: Nuclear receptor subfamily 2 group F member 6 (404 aa).

Residues 1–15 (MAMVTGGWGGPGGDT) show a composition bias toward gly residues. Residues 1-49 (MAMVTGGWGGPGGDTNGVDKAGGYPRAAEDDSASPPGAASDAEPGDEER) are disordered. Positions 33-42 (ASPPGAASDA) are enriched in low complexity. A phosphoserine mark is found at S34 and S40. A DNA-binding region (nuclear receptor) is located at residues 53–128 (QVDCVVCGDK…VGMRKEAVQR (76 aa)). The segment at 56-76 (CVVCGDKSSGKHYGVFTCEGC) adopts an NR C4-type zinc-finger fold. S83 is subject to Phosphoserine. The segment at 92-116 (CRSNRDCQIDQHHRNQCQYCRLKKC) adopts an NR C4-type zinc-finger fold. The NR LBD domain maps to 165–393 (PVSELIAQLL…TLIRDMLLSG (229 aa)). The interval 327–404 (LQEKAQVALT…TFNWPYGSGQ (78 aa)) is important for dimerization.

It belongs to the nuclear hormone receptor family. NR2 subfamily. In terms of assembly, binds DNA as dimer; homodimer and heterodimer with NR2F2 and probably NR2F1. Interacts with THRB. Expressed in heart, placenta, liver, skeletal muscle, kidney and pancreas.

It localises to the nucleus. Its function is as follows. Transcription factor predominantly involved in transcriptional repression. Binds to promoter/enhancer response elements that contain the imperfect 5'-AGGTCA-3' direct or inverted repeats with various spacings which are also recognized by other nuclear hormone receptors. Involved in modulation of hormonal responses. Represses transcriptional activity of the lutropin-choriogonadotropic hormone receptor/LHCGR gene, the renin/REN gene and the oxytocin-neurophysin/OXT gene. Represses the triiodothyronine-dependent and -independent transcriptional activity of the thyroid hormone receptor gene in a cell type-specific manner. The corepressing function towards thyroid hormone receptor beta/THRB involves at least in part the inhibition of THRB binding to triiodothyronine response elements (TREs) by NR2F6. Inhibits NFATC transcription factor DNA binding and subsequently its transcriptional activity. Acts as transcriptional repressor of IL-17 expression in Th-17 differentiated CD4(+) T cells and may be involved in induction and/or maintenance of peripheral immunological tolerance and autoimmunity. Involved in development of forebrain circadian clock; is required early in the development of the locus coeruleus (LC). The protein is Nuclear receptor subfamily 2 group F member 6 (NR2F6) of Homo sapiens (Human).